The sequence spans 316 residues: L-lactate dehydrogenase (316 aa).

Residues valine 15, aspartate 37, lysine 42, tyrosine 68, and 82–83 (GL) each bind NAD(+). Residues glutamine 85, arginine 91, and 123–126 (NPVD) contribute to the substrate site. Residues 121–123 (ASN) and threonine 146 contribute to the NAD(+) site. 151–154 (DTSR) serves as a coordination point for substrate. Residues arginine 156 and histidine 171 each coordinate beta-D-fructose 1,6-bisphosphate. Histidine 178 serves as the catalytic Proton acceptor. Position 222 is a phosphotyrosine (tyrosine 222). Threonine 231 lines the substrate pocket.

The protein belongs to the LDH/MDH superfamily. LDH family. As to quaternary structure, homotetramer.

It is found in the cytoplasm. It carries out the reaction (S)-lactate + NAD(+) = pyruvate + NADH + H(+). It participates in fermentation; pyruvate fermentation to lactate; (S)-lactate from pyruvate: step 1/1. Its activity is regulated as follows. Allosterically activated by fructose 1,6-bisphosphate (FBP). Functionally, catalyzes the conversion of lactate to pyruvate. The polypeptide is L-lactate dehydrogenase (Borrelia hermsii (strain HS1 / DAH)).